Here is a 342-residue protein sequence, read N- to C-terminus: MFNISPANHEFDDEIQSKIDNKTKPLGALGELENLAKQLALVLGKDKPEIINPKLLVFAADHGIASSGVSIAPSEVTTQMVMNFVAGGAAINVFCRQVGLDMEVIDCGILQPLEGVEGVIDQRLGAGTGAIHKQAAMTLGAVKQGLEMARTRIELHHQQGCNLIALGEMGIGNTSSAAAIMATVMGMKGVDCVGRGTGIDAATLKRKQMLVEQALHIHEAELTDPYNILACLGGFEIVQMTGAMLAAAERNMLVIVDGFIATAAAMVAVQINANVRDYMIFGHQSDERGHCLMMEHLQARPLLRLGMRLGEGSGAVLALPLIRAAAGFYNEMASFSDAGIEI.

Residue Glu-311 is the Proton acceptor of the active site.

This sequence belongs to the CobT family.

The enzyme catalyses 5,6-dimethylbenzimidazole + nicotinate beta-D-ribonucleotide = alpha-ribazole 5'-phosphate + nicotinate + H(+). It functions in the pathway nucleoside biosynthesis; alpha-ribazole biosynthesis; alpha-ribazole from 5,6-dimethylbenzimidazole: step 1/2. Its function is as follows. Catalyzes the synthesis of alpha-ribazole-5'-phosphate from nicotinate mononucleotide (NAMN) and 5,6-dimethylbenzimidazole (DMB). This Shewanella sediminis (strain HAW-EB3) protein is Nicotinate-nucleotide--dimethylbenzimidazole phosphoribosyltransferase.